Consider the following 267-residue polypeptide: B3 domain-containing protein Os02g0455800 (267 aa).

Residues 30-131 (EKFLMPSDLC…RLFICCRLGT (102 aa)) constitute a DNA-binding region (TF-B3). Positions 172–221 (QARLHDGNQDGGGAPSRHVPSSGRRVEAQLSRVSSRRQRRTMKHSIPEPT) are disordered. Over residues 205-214 (SSRRQRRTMK) the composition is skewed to basic residues.

It localises to the nucleus. This Oryza sativa subsp. japonica (Rice) protein is B3 domain-containing protein Os02g0455800.